The following is a 60-amino-acid chain: Large ribosomal subunit protein uL30 (60 aa).

It belongs to the universal ribosomal protein uL30 family. As to quaternary structure, part of the 50S ribosomal subunit.

In Paraburkholderia phytofirmans (strain DSM 17436 / LMG 22146 / PsJN) (Burkholderia phytofirmans), this protein is Large ribosomal subunit protein uL30.